A 62-amino-acid polypeptide reads, in one-letter code: Conotoxin TxIC (62 aa).

The first 22 residues, 1 to 22 (MHCLPIFVILLLLTASGPSVDA), serve as a signal peptide directing secretion. The propeptide occupies 23–47 (QLKTKDDVPLSSFRDHAKSTLRRLQ). Disulfide bonds link C52–C58 and C53–C61. A 4-hydroxyproline modification is found at P60. C61 carries the post-translational modification Cysteine amide.

Belongs to the conotoxin A superfamily. In terms of tissue distribution, expressed by the venom duct.

Its subcellular location is the secreted. The chain is Conotoxin TxIC from Conus textile (Cloth-of-gold cone).